The sequence spans 155 residues: UPF0178 protein Clos_2709 (155 aa).

The protein belongs to the UPF0178 family.

The sequence is that of UPF0178 protein Clos_2709 from Alkaliphilus oremlandii (strain OhILAs) (Clostridium oremlandii (strain OhILAs)).